An 814-amino-acid chain; its full sequence is MAIKLNGSSRSFVPSLRVSAFLIFIFFVITYIIIYNVSFSEPSWITQDALKQNIENLDDYDASCSGYSIGRILREQKRILASVRLELTESQVKIEEIRTVQEELQRLIPQKQLELSALEGEIEAAQRQLEELRETQNVKVFLPFSPLQIPRELEQPSQISPNQLDDIIDYSRCSISSFMPVYVDIITSGQSEKEWLNVFQEVIPNLVETPDKACIKIHISNGIASPNTTFNSILFNVGSPIINFQSKSIHVQASKIRSFDFPVDVNHIAVEKVDLTPLLPFQRENLISLIVDNTELNFSAFSSLSAEPSRRPIVIVKCSQENCSLERRRQLIGSSTFCFLLPSEMFFQDFLSSLQLGCIPIILSNSQLLPFQDLIDWRRATYRLPLARLPEAHFIVQSFEISDIIEMRRVGRLFYETYLADRHLLARSLLAALRYKLQIPTREVRRNQAIPLFNSSFTAPKGSVVNVQANFDDEYLLGPLESRVESTSYAYNFTEFQLYSYDFWNIIMSPHYTKEFLVNAAELPTEAEFFEDTKIGFRPIEPGSGAEFSKALGGNRQREQFTVVLLTYERDAVLTGALERLHQLPYLNKIIVVWNNVNRDPPDTWPSLHIPVEFIRVAENNLNNRFVPWDRIETEAVLSLDDDIDLMQQEIILAFRVWRENRDRIVGFPARHHARYGDSMFYNSNHTCQMSMILTGAAFIHKNYLTAYTYEMPAEIREHVNSIKNCEDIAMNYLVSHLTRKPPIKTTSRWTLKCPTCTESLYKEGTHFEKRHECMRLFTKIYGYNPLKFSQFRADSILFKTRLPQNHQKCFKYV.

Topologically, residues 1–14 (MAIKLNGSSRSFVP) are cytoplasmic. A helical; Signal-anchor for type II membrane protein membrane pass occupies residues 15–35 (SLRVSAFLIFIFFVITYIIIY). 6 N-linked (GlcNAc...) asparagine glycosylation sites follow: Asn-36, Asn-227, Asn-297, Asn-322, Asn-454, and Asn-492. Topologically, residues 36–814 (NVSFSEPSWI…QNHQKCFKYV (779 aa)) are lumenal. UDP-N-acetyl-alpha-D-glucosamine contacts are provided by Arg-570, Asn-595, Asn-620, Arg-625, Asp-641, Asp-642, and Asp-643. Asp-643 is a binding site for Mn(2+). N-linked (GlcNAc...) asparagine glycosylation occurs at Asn-685. A disulfide bond links Cys-726 and Cys-774. Glu-727, Asp-728, and Arg-771 together coordinate UDP-N-acetyl-alpha-D-glucosamine. Asp-728 is a catalytic residue.

This sequence belongs to the glycosyltransferase 47 family. In terms of assembly, interacts with rib-1. The cofactor is Mn(2+).

Its subcellular location is the endoplasmic reticulum membrane. It is found in the golgi apparatus membrane. The enzyme catalyses 3-O-(beta-D-GlcA-(1-&gt;3)-beta-D-Gal-(1-&gt;3)-beta-D-Gal-(1-&gt;4)-beta-D-Xyl)-L-seryl-[protein] + UDP-N-acetyl-alpha-D-glucosamine = 3-O-(alpha-D-GlcNAc-(1-&gt;4)-beta-D-GlcA-(1-&gt;3)-beta-D-Gal-(1-&gt;3)-beta-D-Gal-(1-&gt;4)-beta-D-Xyl)-L-seryl-[protein] + UDP + H(+). It catalyses the reaction 3-O-{[(1-&gt;4)-beta-D-GlcA-(1-&gt;4)-alpha-D-GlcNAc](n)-(1-&gt;4)-beta-D-GlcA-(1-&gt;3)-beta-D-Gal-(1-&gt;3)-beta-D-Gal-(1-&gt;4)-beta-D-Xyl}-L-seryl-[protein] + UDP-N-acetyl-alpha-D-glucosamine = 3-O-{alpha-D-GlcNAc-[(1-&gt;4)-beta-D-GlcA-(1-&gt;4)-alpha-D-GlcNAc](n)-(1-&gt;4)-beta-D-GlcA-(1-&gt;3)-beta-D-Gal-(1-&gt;3)-beta-D-Gal-(1-&gt;4)-beta-D-Xyl}-L-seryl-[protein] + UDP + H(+). It carries out the reaction 3-O-{alpha-D-GlcNAc-[(1-&gt;4)-beta-D-GlcA-(1-&gt;4)-alpha-D-GlcNAc](n)-(1-&gt;4)-beta-D-GlcA-(1-&gt;3)-beta-D-Gal-(1-&gt;3)-beta-D-Gal-(1-&gt;4)-beta-D-Xyl}-L-seryl-[protein] + UDP-alpha-D-glucuronate = 3-O-{[(1-&gt;4)-beta-D-GlcA-(1-&gt;4)-alpha-D-GlcNAc](n+1)-(1-&gt;4)-beta-D-GlcA-(1-&gt;3)-beta-D-Gal-(1-&gt;3)-beta-D-Gal-(1-&gt;4)-beta-D-Xyl}-L-seryl-[protein] + UDP + H(+). It functions in the pathway glycan metabolism; heparan sulfate biosynthesis. Its activity is regulated as follows. Binding to rib-1 is required for GlcAT-II activity and for increasing GlcNAc-II activity in vitro. Glycosyltransferase required for the biosynthesis of heparan sulfate. Initiates heparan sulfate synthesis by transferring GlcNAc to the (GlcA-Gal-Gal-Xyl-)Ser core linker (GlcNAcT-I activity). In association with rib-1, is also responsible for the alternating addition of beta-1-4-linked glucuronic acid (GlcA) and alpha-1-4-linked N-acetylglucosamine (GlcNAc) units to nascent heparan sulfate chains (GlcNAcT-II and GlcAT-II activities). Required for normal ventral epidermal enclosure during the early stages of embryonic development. In addition, involved in the elongation of the pharyngeal isthmus during the later stages of embryonic development. Involved in the directed migration of hermaphrodite-specific neurons. This chain is Exostosin-like-3 homolog (rib-2), found in Caenorhabditis elegans.